A 1069-amino-acid chain; its full sequence is Degenerin-like protein del-10 (1069 aa).

The Cytoplasmic segment spans residues 1–95 (MVRMAERLAE…LNAASPVTRG (95 aa)). The chain crosses the membrane as a helical span at residues 96–116 (LWCMIIIAFVILVLVQCYSQI). Residues 117–830 (KLYISEPVAT…FWSLACDIGG (714 aa)) lie on the Extracellular side of the membrane. N-linked (GlcNAc...) asparagine glycosylation is found at Asn-216, Asn-290, Asn-374, Asn-454, Asn-539, Asn-545, and Asn-584. A helical membrane pass occupies residues 831 to 851 (ALGLFLGASLLTIIEIVYLCI). The Cytoplasmic segment spans residues 852 to 1069 (QYGLCGKRAR…EEDDDKHSYV (218 aa)). Disordered regions lie at residues 898 to 948 (KKSQ…TLTP) and 960 to 1069 (RNSQ…HSYV). A compositionally biased stretch (basic and acidic residues) spans 915-928 (GDKFRSRASSEESK). Positions 938 to 948 (NDPSGNSTLTP) are enriched in polar residues. The span at 967-978 (YHDDHHPEDHYY) shows a compositional bias: basic and acidic residues.

Belongs to the amiloride-sensitive sodium channel (TC 1.A.6) family.

The protein localises to the membrane. The chain is Degenerin-like protein del-10 from Caenorhabditis elegans.